The following is a 101-amino-acid chain: uncharacterized protein (101 aa).

The signal sequence occupies residues 1–19 (MKFKYLSTPLLFSALLFSA). Cysteine 20 is lipidated: N-palmitoyl cysteine. Cysteine 20 is lipidated: S-diacylglycerol cysteine.

This sequence belongs to the MG439/MG440 family.

It is found in the cell membrane. This is an uncharacterized protein from Mycoplasma pneumoniae (strain ATCC 29342 / M129 / Subtype 1) (Mycoplasmoides pneumoniae).